Consider the following 224-residue polypeptide: MNLENKSAVILLSGGLDSSTVTGLAKASKAKIFGLSFDYGQRHKKELNSALTIAKHFAIEEFKIVKLDLSLWGGSSLTDTKKDLPIEGVQLNTIPNTYVPGRNTIFISVALSYAEAINADLIGLGVNALDYSGYPDCRPDYIKKFQELAYLANKRGREDNPIKLWTPLIDLNKEDIIQLAFDHNVPLEKTWSCYSGNLKPCGKCDSCRIRQTAYKKWQIKQNEY.

12-22 serves as a coordination point for ATP; that stretch reads LSGGLDSSTVT. Residues Cys193, Cys201, Cys204, and Cys207 each coordinate Zn(2+).

It belongs to the QueC family. The cofactor is Zn(2+).

It catalyses the reaction 7-carboxy-7-deazaguanine + NH4(+) + ATP = 7-cyano-7-deazaguanine + ADP + phosphate + H2O + H(+). Its pathway is purine metabolism; 7-cyano-7-deazaguanine biosynthesis. Catalyzes the ATP-dependent conversion of 7-carboxy-7-deazaguanine (CDG) to 7-cyano-7-deazaguanine (preQ(0)). In Prochlorococcus marinus (strain MIT 9515), this protein is 7-cyano-7-deazaguanine synthase.